Consider the following 421-residue polypeptide: Shaggy-related protein kinase kappa (421 aa).

The span at 1 to 10 (MASSGLGNGV) shows a compositional bias: gly residues. A disordered region spans residues 1–60 (MASSGLGNGVGTSRSAKGLKSSSSSVDWLTRDLAETRIRDKVETDDERDSEPDIIDGAGA). Residues 29 to 42 (LTRDLAETRIRDKV) are compositionally biased toward basic and acidic residues. The segment covering 43–54 (ETDDERDSEPDI) has biased composition (acidic residues). The 285-residue stretch at 83–367 (YISEHVVGTG…ALEACIHPLF (285 aa)) folds into the Protein kinase domain. Residues 89-97 (VGTGSFGMV) and Lys112 each bind ATP. The active-site Proton acceptor is Asp208. Tyr243 carries the post-translational modification Phosphotyrosine.

It belongs to the protein kinase superfamily. CMGC Ser/Thr protein kinase family. GSK-3 subfamily. Post-translationally, autophosphorylated mainly on threonine and serine residues. In terms of tissue distribution, expressed exclusively in inflorescences.

The catalysed reaction is L-seryl-[protein] + ATP = O-phospho-L-seryl-[protein] + ADP + H(+). It carries out the reaction L-threonyl-[protein] + ATP = O-phospho-L-threonyl-[protein] + ADP + H(+). In terms of biological role, may mediate extracellular signals to regulate transcription in differentiating cells. The sequence is that of Shaggy-related protein kinase kappa (ASK10) from Arabidopsis thaliana (Mouse-ear cress).